Reading from the N-terminus, the 136-residue chain is Large ribosomal subunit protein uL16 (136 aa).

The protein belongs to the universal ribosomal protein uL16 family. In terms of assembly, part of the 50S ribosomal subunit.

Functionally, binds 23S rRNA and is also seen to make contacts with the A and possibly P site tRNAs. The sequence is that of Large ribosomal subunit protein uL16 from Rickettsia bellii (strain OSU 85-389).